A 179-amino-acid polypeptide reads, in one-letter code: Cell division protein ZapC (179 aa).

The protein belongs to the ZapC family. As to quaternary structure, interacts directly with FtsZ.

The protein localises to the cytoplasm. Functionally, contributes to the efficiency of the cell division process by stabilizing the polymeric form of the cell division protein FtsZ. Acts by promoting interactions between FtsZ protofilaments and suppressing the GTPase activity of FtsZ. In Tolumonas auensis (strain DSM 9187 / NBRC 110442 / TA 4), this protein is Cell division protein ZapC.